A 232-amino-acid polypeptide reads, in one-letter code: Orotidine 5'-phosphate decarboxylase (232 aa).

Substrate-binding positions include Asp-13, Lys-35, 62 to 71, Thr-122, Arg-182, Gln-191, Gly-211, and Arg-212; that span reads DLKFHDIPNT. The active-site Proton donor is the Lys-64.

This sequence belongs to the OMP decarboxylase family. Type 1 subfamily. Homodimer.

The catalysed reaction is orotidine 5'-phosphate + H(+) = UMP + CO2. Its pathway is pyrimidine metabolism; UMP biosynthesis via de novo pathway; UMP from orotate: step 2/2. In terms of biological role, catalyzes the decarboxylation of orotidine 5'-monophosphate (OMP) to uridine 5'-monophosphate (UMP). This chain is Orotidine 5'-phosphate decarboxylase, found in Pseudomonas syringae pv. syringae (strain B728a).